The primary structure comprises 351 residues: UDP-3-O-acylglucosamine N-acyltransferase (351 aa).

The active-site Proton acceptor is the His257.

It belongs to the transferase hexapeptide repeat family. LpxD subfamily. Homotrimer.

The catalysed reaction is a UDP-3-O-[(3R)-3-hydroxyacyl]-alpha-D-glucosamine + a (3R)-hydroxyacyl-[ACP] = a UDP-2-N,3-O-bis[(3R)-3-hydroxyacyl]-alpha-D-glucosamine + holo-[ACP] + H(+). The protein operates within bacterial outer membrane biogenesis; LPS lipid A biosynthesis. Catalyzes the N-acylation of UDP-3-O-acylglucosamine using 3-hydroxyacyl-ACP as the acyl donor. Is involved in the biosynthesis of lipid A, a phosphorylated glycolipid that anchors the lipopolysaccharide to the outer membrane of the cell. This chain is UDP-3-O-acylglucosamine N-acyltransferase, found in Methylorubrum populi (strain ATCC BAA-705 / NCIMB 13946 / BJ001) (Methylobacterium populi).